The sequence spans 397 residues: MEKILYLDPFSGIAGDMFLGLLVDLGVDPEELKKRLSKLGVEFELRIRKVNKKGITATKVDVVFPGKEHHEDHIDHEHHGRHLSEIMKILERLEDPAREKATEMFETLAEAESKVHGLPKEKVHFHEVGAMDAVIEIAGAVVGLELLGVERVFCGAVNTGSGFVMTEHGRYPVPAPATAELLKGIPIYMDQKVRAELVTPTGAVILKELVDEFGTPILRIEKVGYGAGTVDLEIPNVLRGYLGFLEGKSERDILIETNVDDMNPQLFGYLMEKLFETGAKDVFYTPIYMKKNRPAVKVSVLCSEEKRDQILKVLFKESTSIGARVFHLEKVEAPRKVISVETEYGKIPVKVAYFDSEVVNVSPEYEACKKIAQEKEVPLKEIYNAVYRKISEVQGNV.

This sequence belongs to the LarC family.

The enzyme catalyses Ni(II)-pyridinium-3,5-bisthiocarboxylate mononucleotide = pyridinium-3,5-bisthiocarboxylate mononucleotide + Ni(2+). Its function is as follows. Involved in the biosynthesis of a nickel-pincer cofactor ((SCS)Ni(II) pincer complex). Binds Ni(2+), and functions in nickel delivery to pyridinium-3,5-bisthiocarboxylic acid mononucleotide (P2TMN), to form the mature cofactor. Is thus probably required for the activation of nickel-pincer cofactor-dependent enzymes. The protein is Pyridinium-3,5-bisthiocarboxylic acid mononucleotide nickel insertion protein of Thermotoga petrophila (strain ATCC BAA-488 / DSM 13995 / JCM 10881 / RKU-1).